Consider the following 53-residue polypeptide: Large ribosomal subunit protein bL32 (53 aa).

Positions 1–27 (MAVQQNKKSRSRRDMRRSHDALTTAAV) are disordered. Residues 7–16 (KKSRSRRDMR) show a composition bias toward basic residues.

The protein belongs to the bacterial ribosomal protein bL32 family.

This Glaesserella parasuis serovar 5 (strain SH0165) (Haemophilus parasuis) protein is Large ribosomal subunit protein bL32.